A 127-amino-acid polypeptide reads, in one-letter code: Ribosome-binding factor A (127 aa).

It belongs to the RbfA family. As to quaternary structure, monomer. Binds 30S ribosomal subunits, but not 50S ribosomal subunits or 70S ribosomes.

The protein localises to the cytoplasm. One of several proteins that assist in the late maturation steps of the functional core of the 30S ribosomal subunit. Associates with free 30S ribosomal subunits (but not with 30S subunits that are part of 70S ribosomes or polysomes). Required for efficient processing of 16S rRNA. May interact with the 5'-terminal helix region of 16S rRNA. This is Ribosome-binding factor A from Stenotrophomonas maltophilia (strain R551-3).